The chain runs to 216 residues: Invasion protein InvF (216 aa).

Residues 112–210 form the HTH araC/xylS-type domain; it reads YWLVGYLLAQ…GVSPRKLSNI (99 aa). 2 DNA-binding regions (H-T-H motif) span residues 129 to 150 and 177 to 200; these read RMLG…SRAL and ITQL…KELI.

Its function is as follows. Transcriptional regulator required for the expression of several genes encoding type III secretion system SPI1 effector proteins. The interaction with SicA is necessary for the activation of sigDE (sopB pipC), sicAsipBCDA, and sopE. The chain is Invasion protein InvF (invF) from Salmonella typhi.